The following is a 201-amino-acid chain: MAEKFTQHTGLVVPLDAANVDTDAIIPKQFLQKVTRTGFGAHLFNDWRFLDDKGQQPNPDFVLNFPQYKGASILLARENFGCGSSREHAPWALTDYGFKVVIAPSFADIFYGNSFNNQLLPVTLSDEQVDELFKLVQANPGMTFEVDLEAQVVKAGDKTYSFKIDDFRRHCMLNGLDSIGLTLQHGEAISDYERKLPAFMN.

It belongs to the LeuD family. LeuD type 1 subfamily. In terms of assembly, heterodimer of LeuC and LeuD.

It carries out the reaction (2R,3S)-3-isopropylmalate = (2S)-2-isopropylmalate. The protein operates within amino-acid biosynthesis; L-leucine biosynthesis; L-leucine from 3-methyl-2-oxobutanoate: step 2/4. Its function is as follows. Catalyzes the isomerization between 2-isopropylmalate and 3-isopropylmalate, via the formation of 2-isopropylmaleate. The sequence is that of 3-isopropylmalate dehydratase small subunit from Klebsiella pneumoniae (strain 342).